The chain runs to 354 residues: DNA polymerase IV (354 aa).

The UmuC domain maps to 8–189; it reads IIHVDMDCFY…LPLEKIPGVG (182 aa). 2 residues coordinate Mg(2+): D12 and D107. E108 is an active-site residue.

Belongs to the DNA polymerase type-Y family. In terms of assembly, monomer. It depends on Mg(2+) as a cofactor.

The protein resides in the cytoplasm. The catalysed reaction is DNA(n) + a 2'-deoxyribonucleoside 5'-triphosphate = DNA(n+1) + diphosphate. Poorly processive, error-prone DNA polymerase involved in untargeted mutagenesis. Copies undamaged DNA at stalled replication forks, which arise in vivo from mismatched or misaligned primer ends. These misaligned primers can be extended by PolIV. Exhibits no 3'-5' exonuclease (proofreading) activity. May be involved in translesional synthesis, in conjunction with the beta clamp from PolIII. This chain is DNA polymerase IV, found in Vibrio parahaemolyticus serotype O3:K6 (strain RIMD 2210633).